The primary structure comprises 727 residues: Ubiquitin carboxyl-terminal hydrolase BAP1 (727 aa).

The region spanning 4–235 is the UCH catalytic domain; sequence GWLELESDPG…IRFNLMAVVP (232 aa). An Arg-finger motif motif is present at residues 56-60; the sequence is RRSRR. The active-site Nucleophile is Cys91. His169 (proton donor) is an active-site residue. The interval 273–351 is disordered; that stretch reads THKSQESQLP…SLNGVPPTPT (79 aa). Ser292 carries the post-translational modification Phosphoserine. Residues 320–330 show a composition bias toward polar residues; that stretch reads CPQTTTHSPPS. The short motif at 363–366 is the HBM-like motif element; that stretch reads NHNY. Residues Ser369 and Ser394 each carry the phosphoserine modification. 2 disordered regions span residues 372-435 and 462-522; these read QEEE…DGQL and SIKT…SPVT. A compositionally biased stretch (acidic residues) spans 394-407; the sequence is SDDEEDYEDEEEDV. 2 stretches are compositionally biased toward polar residues: residues 426-435 and 478-522; these read SLSNSSDGQL and THSQ…SPVT. A Phosphothreonine modification is found at Thr491. Residues Ser519, Ser535, Ser583, and Ser595 each carry the phosphoserine modification. Residues 573-622 form a disordered region; the sequence is LTEGGKGSSPSTRSSQGSQGSSSLEEKEVVEVTDSRDKSGLNRSSEPLSG. Low complexity predominate over residues 580-595; it reads SSPSTRSSQGSQGSSS. An interaction with BRCA1 region spans residues 594 to 719; it reads SSLEEKEVVE…QRKPDRRKRS (126 aa). Residues 596-612 show a composition bias toward basic and acidic residues; sequence LEEKEVVEVTDSRDKSG. Positions 628-659 form a coiled coil; it reads KELLALLKCVEAEIANYEACLKEEVEKRKKFK. The interaction with YY1 stretch occupies residues 640–684; that stretch reads EIANYEACLKEEVEKRKKFKIDDQRRTHNYDEFICTFISMLAQEG. The ULD domain occupies 668–696; it reads NYDEFICTFISMLAQEGMLANLVEQNISV. Residues 697–699 are interaction with nucleosomal DNA forming a DNA clamp with ASXL1; the sequence is RRR. Positions 697 to 720 match the Classical bipartite Nuclear localization signal (NLS) motif; it reads RRRQGVSIGRLHKQRKPDRRKRSR. Residues 702–727 form a disordered region; it reads VSIGRLHKQRKPDRRKRSRPYKAKRQ. Residues 711 to 727 are positively charged C-terminal extension (CTE); it reads RKPDRRKRSRPYKAKRQ. The short motif at 715-720 is the Nuclear localization signal element; the sequence is RRKRSR. Residues 715-722 carry the Non-classical PY-nuclear localization signal (PY-NLS) motif; that stretch reads RRKRSRPY.

It belongs to the peptidase C12 family. BAP1 subfamily. Core component of the polycomb repressive deubiquitinase (PR-DUB) complex, at least composed of BAP1, one of ASXL1, ASXL2 or (probably) ASXL3, and one of MBD5 or MBD6. The PR-DUB core associates with a number of accessory proteins, including FOXK1, FOXK2, KDM1B, HCFC1, YY1 and OGT; KDM1B specifically associates with ASXL2 PR-DUB complexes. The BAP1 deubiquitinase activity is not required for PR-DUB assembly. Homodimerize (via coiled-coil hinge-region between the UCH and ULD domains) to mediate assembly of 2 copies of the BAP1-ASXL heterodimer into a bisymmetric tetramer; dimerization enhances association with nucleosomes. The PR-DUB complex associates with nucleosomes to mediate deubiquitination of 'lys-120' of histone H2AK118ub1 substrates; the association requires the positively charged C-terminal tail of BAP1. Interacts (via ULD domain) with ASXL1 (via DEUBAD domain); the interaction is direct and forms a ubiquitin binding cleft. The interaction with ASXL1 stabilizes BAP1 but is not required for nucleosome binding. Associates (via C-terminus) with nucleosome and chromatosome complexes through direct interaction with DNA and the histone3/4 dimer; this association displaces the histone-2A C-terminal tail, extending and orienting the H2AK118ub1 substrate towards the BAP1 deubiquitinase active site. Also interacts (via arginine finger) directly with the histone H2A-H2B acidic patch; this interaction is not critical for nucleosome-chromatosome association but may play a role in orienting the H2AK118ub1 substrate towards the PR-DUB complex active site. Interacts with BRCA1 (via the RING finger). Interacts (via HBM-like motif) with HCFC1. Interacts (via a C-terminal region overlapping the ULD domain) with YY1; the interaction is direct and requires the interaction with HCFC1. Interacts (when phosphorylated at Thr-491) with FOXK1. Interacts (when phosphorylated at Thr-491) with FOXK2; leading to recruitment of the PR-DUB complex and repression of FOXK2 target genes. Interacts (via non-classical PY-NLS) with TNPO1/transportin-1 (via HEAT repeats 8-12); the interaction is direct, mediates BAP1 nuclear localization and disrupts BAP1 homodimerization. Interacts (via C-terminus) with KPNA1/importin alpha5 and KPNA2/importin alpha1; these interactions can contribute to BAP1 nuclear localization but are less important than the interaction with TNPO1/transportin-1. The interaction with TNPO1/transportin-1 disrupts homodimerization and blocks ubiquitination by UBE2O. Post-translationally, ubiquitinated: monoubiquitinated at multiple sites within its nuclear localization signal (NLS) BY UBE2O, leading to cytoplasmic retention. Able to mediate autodeubiquitination via intramolecular interactions to counteract cytoplasmic retention. Monoubiquitinated on at least 4 sites near or within its PY-NLS.

It localises to the cytoplasm. Its subcellular location is the nucleus. The protein resides in the chromosome. The catalysed reaction is Thiol-dependent hydrolysis of ester, thioester, amide, peptide and isopeptide bonds formed by the C-terminal Gly of ubiquitin (a 76-residue protein attached to proteins as an intracellular targeting signal).. Its function is as follows. Deubiquitinating enzyme that plays a key role in chromatin by mediating deubiquitination of histone H2A and HCFC1. Catalytic component of the polycomb repressive deubiquitinase (PR-DUB) complex, a complex that specifically mediates deubiquitination of histone H2A monoubiquitinated at 'Lys-120' (H2AK119ub1). Does not deubiquitinate monoubiquitinated histone H2B. The PR-DUB complex is an epigenetic regulator of gene expression and acts as a transcriptional coactivator, affecting genes involved in development, cell communication, signaling, cell proliferation and cell viability. Antagonizes PRC1 mediated H2AK119ub1 monoubiquitination. As part of the PR-DUB complex, associates with chromatin enriched in histone marks H3K4me1, H3K4me3, and H3K27Ac, but not in H3K27me3. Acts as a regulator of cell growth by mediating deubiquitination of HCFC1 N-terminal and C-terminal chains, with some specificity toward 'Lys-48'-linked polyubiquitin chains compared to 'Lys-63'-linked polyubiquitin chains. Deubiquitination of HCFC1 does not lead to increase stability of HCFC1. Interferes with the BRCA1 and BARD1 heterodimer activity by inhibiting their ability to mediate ubiquitination and autoubiquitination. It however does not mediate deubiquitination of BRCA1 and BARD1. Able to mediate autodeubiquitination via intramolecular interactions to counteract monoubiquitination at the nuclear localization signal (NLS), thereby protecting it from cytoplasmic sequestration. Acts as a tumor suppressor. Negatively regulates epithelial-mesenchymal transition (EMT) of trophoblast stem cells during placental development by regulating genes involved in epithelial cell integrity, cell adhesion and cytoskeletal organization. This is Ubiquitin carboxyl-terminal hydrolase BAP1 (Bap1) from Rattus norvegicus (Rat).